The following is a 462-amino-acid chain: Citrate synthase, mitochondrial (462 aa).

The transit peptide at 1–21 (MRSINQLLKQASLSQKSQYNF) directs the protein to the mitochondrion. Catalysis depends on residues histidine 300, histidine 346, and aspartate 401.

Belongs to the citrate synthase family. As to quaternary structure, homodimer.

The protein resides in the mitochondrion matrix. It localises to the cytoplasm. The protein localises to the cytoskeleton. The catalysed reaction is oxaloacetate + acetyl-CoA + H2O = citrate + CoA + H(+). Its pathway is carbohydrate metabolism; tricarboxylic acid cycle; isocitrate from oxaloacetate: step 1/2. Structural protein involved in oral morphogenesis and in pronuclear behavior during conjugation. Respiratory enzyme. The protein is Citrate synthase, mitochondrial of Tetrahymena thermophila.